The sequence spans 49 residues: Large ribosomal subunit protein bL33 (49 aa).

Belongs to the bacterial ribosomal protein bL33 family.

In Streptococcus pyogenes serotype M18 (strain MGAS8232), this protein is Large ribosomal subunit protein bL33.